Reading from the N-terminus, the 515-residue chain is Bifunctional solanapyrone synthase (515 aa).

A signal peptide spans 1–25; sequence MRLIILNLLSLGITPSVVGHSGPHR. Asn-66 is a glycosylation site (N-linked (GlcNAc...) asparagine). In terms of domain architecture, FAD-binding PCMH-type spans 91–261; sequence APKNPACIYT…THIVQRTYPL (171 aa). Pros-8alpha-FAD histidine is present on His-128. Residues Asn-274 and Asn-355 are each glycosylated (N-linked (GlcNAc...) asparagine).

This sequence belongs to the oxygen-dependent FAD-linked oxidoreductase family. Requires FAD as cofactor.

It carries out the reaction prosolanapyrone II + O2 = prosolanapyrone III + H2O2. It catalyses the reaction prosolanapyrone III = (-)-solanapyrone A. The catalysed reaction is prosolanapyrone III = solanapyrone D. The protein operates within phytotoxin biosynthesis. Bifunctional solanapyrone synthase; part of the gene cluster that mediates the biosynthesis of the phytotoxin solanapyrone, a causal agent of early blight disease of potato and tomato. The prosolanapyrone synthase sol1 is a polyketide synthase that produces the octaketide desmethylprosolanapyrone I via sequential condensations of 7 malonyl-CoA units with one acetyl-CoA unit, and one methylation step. The octaketide backbone is further methylated by the sol2 O-methyltransferase to yield prosolanapyrone I. Prosolanapyrone I is hydroxylated to prosolanapyrone II by the cytochrome P450 monooxygenase sol6. The solanapyrone synthase sol5 then catalyzes the oxidation of prosolanapyrone II and the subsequent Diels Alder cycloisomerization of the product prosolanapyrone III to solanapyrones A and D. Solanapyrones A and D are then converted into solanapyrones B and E, respectively, by the sol3 dehydrogenase. In Alternaria solani, this protein is Bifunctional solanapyrone synthase (sol5).